A 132-amino-acid chain; its full sequence is Extracellular small neutral protease (132 aa).

The Ca(2+) site is built by D76 and T78. H83 provides a ligand contact to Zn(2+). The active site involves E84. Zn(2+) is bound by residues H87 and D93. A disulfide bridge connects residues C99 and C112.

It belongs to the peptidase M7 family. It depends on Ca(2+) as a cofactor. Zn(2+) is required as a cofactor.

Its subcellular location is the secreted. The catalysed reaction is Hydrolyzes proteins with a preference for Tyr or Phe in the P1' position. Has no action on amino-acid p-nitroanilides.. In terms of biological role, specifically hydrolyzes the peptide bond at the imino side of aromatic residues. This is Extracellular small neutral protease (snpA) from Streptomyces caespitosus.